A 242-amino-acid chain; its full sequence is Glucosamine-6-phosphate deaminase (242 aa).

Asp-67 (proton acceptor; for enolization step) is an active-site residue. Catalysis depends on Asn-136, which acts as the For ring-opening step. His-138 functions as the Proton acceptor; for ring-opening step in the catalytic mechanism. Glu-143 serves as the catalytic For ring-opening step.

This sequence belongs to the glucosamine/galactosamine-6-phosphate isomerase family. NagB subfamily.

The catalysed reaction is alpha-D-glucosamine 6-phosphate + H2O = beta-D-fructose 6-phosphate + NH4(+). It participates in amino-sugar metabolism; N-acetylneuraminate degradation; D-fructose 6-phosphate from N-acetylneuraminate: step 5/5. Catalyzes the reversible isomerization-deamination of glucosamine 6-phosphate (GlcN6P) to form fructose 6-phosphate (Fru6P) and ammonium ion. The protein is Glucosamine-6-phosphate deaminase of Clostridium beijerinckii (strain ATCC 51743 / NCIMB 8052) (Clostridium acetobutylicum).